Here is a 953-residue protein sequence, read N- to C-terminus: Isoleucine--tRNA ligase (953 aa).

The short motif at 57–67 (PYANGDIHIGH) is the 'HIGH' region element. Glu582 serves as a coordination point for L-isoleucyl-5'-AMP. The short motif at 623 to 627 (KMSKS) is the 'KMSKS' region element. Residue Lys626 participates in ATP binding. Zn(2+) contacts are provided by Cys916, Cys919, Cys936, and Cys939.

It belongs to the class-I aminoacyl-tRNA synthetase family. IleS type 1 subfamily. In terms of assembly, monomer. Zn(2+) is required as a cofactor.

It is found in the cytoplasm. It catalyses the reaction tRNA(Ile) + L-isoleucine + ATP = L-isoleucyl-tRNA(Ile) + AMP + diphosphate. Catalyzes the attachment of isoleucine to tRNA(Ile). As IleRS can inadvertently accommodate and process structurally similar amino acids such as valine, to avoid such errors it has two additional distinct tRNA(Ile)-dependent editing activities. One activity is designated as 'pretransfer' editing and involves the hydrolysis of activated Val-AMP. The other activity is designated 'posttransfer' editing and involves deacylation of mischarged Val-tRNA(Ile). The protein is Isoleucine--tRNA ligase of Bordetella petrii (strain ATCC BAA-461 / DSM 12804 / CCUG 43448).